We begin with the raw amino-acid sequence, 230 residues long: MAKTEQDRLKKEAAEKAASMVKSGMILGVGTGSTVAFFIDALGKRKDNDGLKLKAIVTTSNRSKNQLEGLGFKVSELADVDQVDLTVDGSDRVADNLDGIKGGGGALTLEKNVAINSKKIIWIVDESKLVHRLGGFPLPVEVLPISCEQNFKRFKQEGLKPQWRMDSDKRYITHYGNYIIDLAADPVPAPHGLADYLDHTVGVVEHGLFLDMCDEVIIAHSDGTIEDKIK.

Substrate is bound by residues 31–34 (TGST), 88–91 (DGSD), and 101–104 (KGGG). The active-site Proton acceptor is the Glu110. A substrate-binding site is contributed by Lys128.

Belongs to the ribose 5-phosphate isomerase family. Homodimer.

The enzyme catalyses aldehydo-D-ribose 5-phosphate = D-ribulose 5-phosphate. It participates in carbohydrate degradation; pentose phosphate pathway; D-ribose 5-phosphate from D-ribulose 5-phosphate (non-oxidative stage): step 1/1. Its function is as follows. Catalyzes the reversible conversion of ribose-5-phosphate to ribulose 5-phosphate. The protein is Ribose-5-phosphate isomerase A of Lactobacillus helveticus (strain DPC 4571).